Reading from the N-terminus, the 568-residue chain is Type 3 secretion system secretin (568 aa).

The signal sequence occupies residues 1-15; that stretch reads MAAALLLWTAGTVCA. The segment at 203 to 292 is disordered; sequence YGGDGPSDSG…RGSTPIIRAD (90 aa). A compositionally biased stretch (gly residues) spans 243-257; sequence LGGGKSPLPPGGTGQ. The segment covering 273–284 has biased composition (basic and acidic residues); it reads NRLRSDELDDRG.

It belongs to the bacterial secretin family. T3SS SctC subfamily. In terms of assembly, the core secretion machinery of the T3SS is composed of approximately 20 different proteins, including cytoplasmic components, a base, an export apparatus and a needle. This subunit is part of the base, which anchors the injectisome in the bacterial cell envelope. Forms a stable homooligomeric complex.

Its subcellular location is the cell outer membrane. Its function is as follows. Component of the type III secretion system (T3SS), also called injectisome, which is used to inject bacterial effector proteins into eukaryotic host cells. Forms a ring-shaped multimeric structure with an apparent central pore in the outer membrane. The protein is Type 3 secretion system secretin of Ralstonia nicotianae (strain ATCC BAA-1114 / GMI1000) (Ralstonia solanacearum).